The primary structure comprises 220 residues: Large ribosomal subunit protein bL9 (220 aa).

Residues 167–184 (AAAEVEQAEDVAAAEQQD) are compositionally biased toward low complexity. The disordered stretch occupies residues 167–220 (AAAEVEQAEDVAAAEQQDSSPVDDHADDADGVADGEGRDEGAGDASDEEEMPST). Residues 211–220 (ASDEEEMPST) are compositionally biased toward acidic residues.

It belongs to the bacterial ribosomal protein bL9 family.

Binds to the 23S rRNA. The sequence is that of Large ribosomal subunit protein bL9 from Anaplasma marginale (strain Florida).